The primary structure comprises 143 residues: Large ribosomal subunit protein uL11 (143 aa).

The protein belongs to the universal ribosomal protein uL11 family. As to quaternary structure, part of the ribosomal stalk of the 50S ribosomal subunit. Interacts with L10 and the large rRNA to form the base of the stalk. L10 forms an elongated spine to which L12 dimers bind in a sequential fashion forming a multimeric L10(L12)X complex. One or more lysine residues are methylated.

Its function is as follows. Forms part of the ribosomal stalk which helps the ribosome interact with GTP-bound translation factors. This is Large ribosomal subunit protein uL11 from Leifsonia xyli subsp. xyli (strain CTCB07).